A 276-amino-acid chain; its full sequence is tRNA (guanine-N(7)-)-methyltransferase (276 aa).

Residues 1–23 (MRPDPAPLDPTDASPAQARRHQP) form a disordered region. S-adenosyl-L-methionine contacts are provided by Glu-103, Glu-128, Asp-155, and Asp-178. Residue Asp-178 is part of the active site. Substrate is bound by residues Lys-182, Asp-214, and 252–255 (TRYE).

Belongs to the class I-like SAM-binding methyltransferase superfamily. TrmB family.

The catalysed reaction is guanosine(46) in tRNA + S-adenosyl-L-methionine = N(7)-methylguanosine(46) in tRNA + S-adenosyl-L-homocysteine. It functions in the pathway tRNA modification; N(7)-methylguanine-tRNA biosynthesis. Its function is as follows. Catalyzes the formation of N(7)-methylguanine at position 46 (m7G46) in tRNA. This chain is tRNA (guanine-N(7)-)-methyltransferase, found in Cutibacterium acnes (strain DSM 16379 / KPA171202) (Propionibacterium acnes).